The following is a 275-amino-acid chain: Epidermal growth factor-like protein 7 (275 aa).

Positions 1–21 (MWGSGELLVAWFLVLAADGTT) are cleaved as a signal peptide. The EMI domain occupies 28–105 (SRRVCTVGIS…TSGLPGACGA (78 aa)). Cystine bridges form between cysteine 32-cysteine 90, cysteine 57-cysteine 63, cysteine 89-cysteine 103, cysteine 108-cysteine 118, cysteine 112-cysteine 124, cysteine 126-cysteine 135, cysteine 142-cysteine 153, and cysteine 149-cysteine 162. Residues 104-136 (GAAICQPPCGNGGSCIRPGHCRCPVGWQGDTCQ) form the EGF-like 1 domain. The Cell attachment site motif lies at 131–133 (QGD). Residues 138-178 (DVDECSTGEASCPQRCVNTVGSYWCQGWEGQSPSADGTRCL) form the EGF-like 2; calcium-binding domain. The disordered stretch occupies residues 173–193 (DGTRCLSKEGPSPVAPNPTAG). Residues 196–220 (SMAREEVYRLQARVDVLEQKLQLVL) adopt a coiled-coil conformation.

In terms of assembly, interacts with ITGAV/ITGB3 in an RGD-dependent manner, increasing endothelial cell's motility. Expressed specifically by endothelial cells of the highly vascularized organs heart, lung and kidney.

It localises to the secreted. The protein localises to the extracellular space. Its function is as follows. Regulates vascular tubulogenesis in vivo. Inhibits platelet-derived growth factor (PDGF)-BB-induced smooth muscle cell migration and promotes endothelial cell adhesion to the extracellular matrix and angiogenesis. The protein is Epidermal growth factor-like protein 7 (Egfl7) of Mus musculus (Mouse).